We begin with the raw amino-acid sequence, 148 residues long: Nodulation protein NolJ (148 aa).

Over residues 66–78 the composition is skewed to acidic residues; sequence ADEAMEETEEDAD. 2 disordered regions span residues 66–93 and 124–148; these read ADEA…VSDG and AAKG…RGYG. The span at 124-136 shows a compositional bias: low complexity; the sequence is AAKGAGAAVPGPN.

In terms of biological role, involved in efficiency of soybean nodulation and in nodulation delay. This Rhizobium fredii (Sinorhizobium fredii) protein is Nodulation protein NolJ (nolJ).